A 229-amino-acid polypeptide reads, in one-letter code: NAD(P)H-hydrate epimerase (229 aa).

A YjeF N-terminal domain is found at 11–222; that stretch reads YAAADIRAAE…DVGLDLSGAT (212 aa). A (6S)-NADPHX-binding site is contributed by 59–63; it reads NNGGD. Residues Asn60 and Asp124 each contribute to the K(+) site. (6S)-NADPHX-binding positions include 128–136 and Asp164; that span reads GIGTTASPA. Ser167 is a K(+) binding site.

This sequence belongs to the NnrE/AIBP family. The cofactor is K(+).

The catalysed reaction is (6R)-NADHX = (6S)-NADHX. The enzyme catalyses (6R)-NADPHX = (6S)-NADPHX. Catalyzes the epimerization of the S- and R-forms of NAD(P)HX, a damaged form of NAD(P)H that is a result of enzymatic or heat-dependent hydration. This is a prerequisite for the S-specific NAD(P)H-hydrate dehydratase to allow the repair of both epimers of NAD(P)HX. The chain is NAD(P)H-hydrate epimerase from Clavibacter sepedonicus (Clavibacter michiganensis subsp. sepedonicus).